The primary structure comprises 153 residues: uncharacterized protein (153 aa).

This is an uncharacterized protein from Alkalihalophilus pseudofirmus (strain ATCC BAA-2126 / JCM 17055 / OF4) (Bacillus pseudofirmus).